The primary structure comprises 316 residues: MRKRARIIYNPTSGKELFKRVLPDALIKLEKAGYETSAYATEKIGDATFEAERALESEYDLLIAAGGDGTLNEVVNGIAEQPNRPKLGVIPMGTVNDFGRALHLPSDIMGAIDVIIDGHTTKVDIGKMNNRYFINLAAGGKLTQVSYETPSKLKSIVGPFAYYIKGFEMLPQMKAVDVRIEYDDNIFQGEALLFLLGLTNSMAGFEKLVPDAKLDDGYFTLIIVEKANLAELGHIMTLASRGEHTKHPKVIYAKAKSINISSFTDMQLNVDGEYGGKLPANFLNLEQHIEIFTPKDVFNEELLENDTITDITPDKQ.

Residues 1-132 (MRKRARIIYN…VDIGKMNNRY (132 aa)) form the DAGKc domain. ATP is bound by residues 10-14 (NPTSG), Thr-41, 67-73 (GDGTLNE), and Thr-94. Mg(2+) is bound by residues Lys-213, Asp-216, and Tyr-218. The active-site Proton acceptor is the Glu-273.

This sequence belongs to the diacylglycerol/lipid kinase family. As to quaternary structure, homodimer. It depends on Mg(2+) as a cofactor.

It carries out the reaction a 1,2-diacyl-sn-glycerol + ATP = a 1,2-diacyl-sn-glycero-3-phosphate + ADP + H(+). Its function is as follows. Catalyzes the phosphorylation of diacylglycerol (DAG) into phosphatidic acid. Is a key enzyme involved in the production of lipoteichoic acid by reintroducing DAG formed from the breakdown of membrane phospholipids into the phosphatidylglycerol biosynthetic pathway. The sequence is that of Diacylglycerol kinase (dagK) from Staphylococcus epidermidis (strain ATCC 35984 / DSM 28319 / BCRC 17069 / CCUG 31568 / BM 3577 / RP62A).